Reading from the N-terminus, the 156-residue chain is MNKIESFKINHLKLMPGIYVSRKDYLGNEVLTTFDLRITAPNREPVMNTAEVHAIEHLGATFLRNKLENEVIYFGPMGCRTGFYLILVGDKKSEDIVDLIKELFEFISNYEGEIPGQSAKDCGNYSDMNLSMAKFYSNKYLNVINNIKKENLIYPE.

Residues H53, H57, and C122 each coordinate Fe cation.

Belongs to the LuxS family. In terms of assembly, homodimer. Fe cation serves as cofactor.

It catalyses the reaction S-(5-deoxy-D-ribos-5-yl)-L-homocysteine = (S)-4,5-dihydroxypentane-2,3-dione + L-homocysteine. In terms of biological role, involved in the synthesis of autoinducer 2 (AI-2) which is secreted by bacteria and is used to communicate both the cell density and the metabolic potential of the environment. The regulation of gene expression in response to changes in cell density is called quorum sensing. Catalyzes the transformation of S-ribosylhomocysteine (RHC) to homocysteine (HC) and 4,5-dihydroxy-2,3-pentadione (DPD). This is S-ribosylhomocysteine lyase from Finegoldia magna (strain ATCC 29328 / DSM 20472 / WAL 2508) (Peptostreptococcus magnus).